The chain runs to 636 residues: Asparagine synthetase domain-containing protein 1 (636 aa).

Cys2 serves as the catalytic Nucleophile. The Glutamine amidotransferase type-2 domain maps to 2-187 (CGICCVVALS…ASGIFKMDLR (186 aa)). The 317-residue stretch at 291-607 (QFIDVLDEAV…GLEAASILPK (317 aa)) folds into the Asparagine synthetase domain.

In Gallus gallus (Chicken), this protein is Asparagine synthetase domain-containing protein 1 (ASNSD1).